We begin with the raw amino-acid sequence, 335 residues long: 3-dehydroquinate synthase (335 aa).

NAD(+) contacts are provided by residues 56–61 (DGEKYK), 90–94 (GVITD), 114–115 (TT), Lys-127, Lys-135, and 153–156 (FLKT). Zn(2+)-binding residues include Glu-168, His-227, and His-243.

It belongs to the sugar phosphate cyclases superfamily. Dehydroquinate synthase family. The cofactor is NAD(+). Requires Co(2+) as cofactor. Zn(2+) serves as cofactor.

Its subcellular location is the cytoplasm. The enzyme catalyses 7-phospho-2-dehydro-3-deoxy-D-arabino-heptonate = 3-dehydroquinate + phosphate. The protein operates within metabolic intermediate biosynthesis; chorismate biosynthesis; chorismate from D-erythrose 4-phosphate and phosphoenolpyruvate: step 2/7. Catalyzes the conversion of 3-deoxy-D-arabino-heptulosonate 7-phosphate (DAHP) to dehydroquinate (DHQ). This is 3-dehydroquinate synthase from Pyrococcus furiosus (strain ATCC 43587 / DSM 3638 / JCM 8422 / Vc1).